The sequence spans 559 residues: Leucine-rich repeat-containing protein 71 (559 aa).

Residues 1–18 (MSSEQSAPGASPRAPRPG) show a composition bias toward low complexity. The segment at 1 to 56 (MSSEQSAPGASPRAPRPGTQKSSGAVTKKGERAAKEKPATVLPPVGEEEPKSPEEY) is disordered. Positions 28–38 (KKGERAAKEKP) are enriched in basic and acidic residues. LRR repeat units lie at residues 172-193 (NLWK…LPLC), 196-216 (TLRK…HKLM), 221-241 (TIAH…QLLG), 253-266 (TLVS…HIGD), and 281-302 (SLLW…KLAE). Basic and acidic residues-rich tracts occupy residues 324-348 (KGTQ…REKS) and 380-391 (KSWELAKKEEKL). The disordered stretch occupies residues 324–427 (KGTQERSRSP…PEQKPSRAKG (104 aa)).

The sequence is that of Leucine-rich repeat-containing protein 71 (LRRC71) from Homo sapiens (Human).